A 495-amino-acid polypeptide reads, in one-letter code: 3-octaprenyl-4-hydroxybenzoate carboxy-lyase (495 aa).

Asparagine 172 is a Mn(2+) binding site. Prenylated FMN-binding positions include 175–177, 189–191, and 194–195; these read IYR, RWL, and RG. Glutamate 238 lines the Mn(2+) pocket. The Proton donor role is filled by aspartate 287.

It belongs to the UbiD family. In terms of assembly, homohexamer. Prenylated FMN is required as a cofactor. The cofactor is Mn(2+).

The protein localises to the cell membrane. It catalyses the reaction a 4-hydroxy-3-(all-trans-polyprenyl)benzoate + H(+) = a 2-(all-trans-polyprenyl)phenol + CO2. It functions in the pathway cofactor biosynthesis; ubiquinone biosynthesis. Its function is as follows. Catalyzes the decarboxylation of 3-octaprenyl-4-hydroxy benzoate to 2-octaprenylphenol, an intermediate step in ubiquinone biosynthesis. The sequence is that of 3-octaprenyl-4-hydroxybenzoate carboxy-lyase from Yersinia pseudotuberculosis serotype O:1b (strain IP 31758).